Reading from the N-terminus, the 225-residue chain is UPF0758 protein XOO0495 (225 aa).

The MPN domain occupies 102 to 224 (ALSDPPSVGR…PVSLAERGWL (123 aa)). The Zn(2+) site is built by histidine 173, histidine 175, and aspartate 186. Residues 173-186 (HNHPSGNPEPSKAD) carry the JAMM motif motif.

This sequence belongs to the UPF0758 family.

The protein is UPF0758 protein XOO0495 of Xanthomonas oryzae pv. oryzae (strain KACC10331 / KXO85).